The chain runs to 506 residues: Steroid (22S)-hydroxylase (506 aa).

A helical transmembrane segment spans residues 12 to 32 (LLFFLPFILLALLTFYTTTVA). Residue cysteine 449 coordinates heme.

Belongs to the cytochrome P450 family. Heme is required as a cofactor. In terms of tissue distribution, highly expressed in roots and leaf blades. Expressed in shoot apex, stems, leaf sheaths, inflorescences and flowers.

It localises to the membrane. It carries out the reaction a C28-steroid + reduced [NADPH--hemoprotein reductase] + O2 = a (22S)-22-hydroxy C28-steroid + oxidized [NADPH--hemoprotein reductase] + H2O + H(+). It catalyses the reaction campesterol + reduced [NADPH--hemoprotein reductase] + O2 = (22S)-22-hydroxycampesterol + oxidized [NADPH--hemoprotein reductase] + H2O + H(+). The catalysed reaction is campestanol + reduced [NADPH--hemoprotein reductase] + O2 = 6-deoxycathasterone + oxidized [NADPH--hemoprotein reductase] + H2O + H(+). Its pathway is plant hormone biosynthesis; brassinosteroid biosynthesis. In terms of biological role, catalyzes the C22-alpha-hydroxylation step in brassinosteroid biosynthesis, which is the rate-limiting step in this biosynthetic pathway. Catalyzes the conversion of campesterol (CR) to (22S)-22-hydroxycampesterol (22-OHCR, 22-hydroxyCR) and of campestanol (CN) to 6-deoxycathasterone (6-deoxoCT). Required for auxin responses involved in the regulation of epidermal cells length of the lamina joint. The chain is Steroid (22S)-hydroxylase from Oryza sativa subsp. japonica (Rice).